The primary structure comprises 215 residues: Adenylate kinase (215 aa).

14–19 (GVGKGT) contacts ATP. Residues 34-63 (STGDIFRSVMQEQGALSQTLAHYMNQGLYV) are NMP. AMP is bound by residues T35, R40, 61–63 (LYV), 91–94 (GYPR), and Q98. The LID stretch occupies residues 128–165 (NRLVCPSCGSVYNKQSKPPLKANQCDRCHATLQARNDD). R129 serves as a coordination point for ATP. Zn(2+) is bound by residues C132 and C135. 138-139 (VY) contributes to the ATP binding site. The Zn(2+) site is built by C152 and C155. Positions 162 and 173 each coordinate AMP. ATP is bound at residue Q211.

This sequence belongs to the adenylate kinase family. Monomer.

The protein localises to the cytoplasm. It carries out the reaction AMP + ATP = 2 ADP. It participates in purine metabolism; AMP biosynthesis via salvage pathway; AMP from ADP: step 1/1. Functionally, catalyzes the reversible transfer of the terminal phosphate group between ATP and AMP. Plays an important role in cellular energy homeostasis and in adenine nucleotide metabolism. The protein is Adenylate kinase of Mycoplasma pneumoniae (strain ATCC 29342 / M129 / Subtype 1) (Mycoplasmoides pneumoniae).